Here is a 568-residue protein sequence, read N- to C-terminus: Putative U-box domain-containing protein 55 (568 aa).

Residues 217 to 464 adopt a coiled-coil conformation; that stretch reads QSESDRNDQL…KVAAEKDAAS (248 aa). Residues 496–568 form the U-box domain; the sequence is QPPSYFICPI…AIQEWLQRNS (73 aa).

It carries out the reaction S-ubiquitinyl-[E2 ubiquitin-conjugating enzyme]-L-cysteine + [acceptor protein]-L-lysine = [E2 ubiquitin-conjugating enzyme]-L-cysteine + N(6)-ubiquitinyl-[acceptor protein]-L-lysine.. Its pathway is protein modification; protein ubiquitination. Functionally, functions as an E3 ubiquitin ligase. The polypeptide is Putative U-box domain-containing protein 55 (PUB55) (Arabidopsis thaliana (Mouse-ear cress)).